Reading from the N-terminus, the 76-residue chain is Pigment-dispersing hormone A peptides (76 aa).

The signal sequence occupies residues 1-20 (MRSAMVVLVLVAMVAVFTRA). Ala73 carries the alanine amide modification.

The protein belongs to the arthropod PDH family. Optical ganglia of the eyestalk.

Its subcellular location is the secreted. The pigment-dispersing hormone causes the migration of the distal retinal pigment into the proximal end of the pigment chromatophore cells and thus decreases the amount of light entering the retinulas. May also function as a neurotransmitter and/or neuromodulator. In Faxonius limosus (Spinycheek crayfish), this protein is Pigment-dispersing hormone A peptides.